We begin with the raw amino-acid sequence, 102 residues long: N(4)-acetylcytidine amidohydrolase (102 aa).

The region spanning 6–92 (TFFGRFEADI…VIKAIYPGLD (87 aa)) is the ASCH domain. Residue Lys-20 is the Proton acceptor of the active site. Residue Thr-23 is the Nucleophile of the active site. Residue Glu-73 is the Proton donor of the active site.

The protein belongs to the N(4)-acetylcytidine amidohydrolase family.

The catalysed reaction is N(4)-acetylcytidine + H2O = cytidine + acetate + H(+). It catalyses the reaction N(4)-acetyl-2'-deoxycytidine + H2O = 2'-deoxycytidine + acetate + H(+). The enzyme catalyses N(4)-acetylcytosine + H2O = cytosine + acetate + H(+). In terms of biological role, catalyzes the hydrolysis of N(4)-acetylcytidine (ac4C). In Yersinia pseudotuberculosis serotype O:1b (strain IP 31758), this protein is N(4)-acetylcytidine amidohydrolase.